We begin with the raw amino-acid sequence, 600 residues long: UvrABC system protein C (600 aa).

Positions 15–92 constitute a GIY-YIG domain; the sequence is EKPGCYLMKD…IKKYQPYYNV (78 aa). The UVR domain maps to 197-232; the sequence is GAVKQDLTQKMEQASEQLEFERAAEIRDQLKYIEET.

The protein belongs to the UvrC family. In terms of assembly, interacts with UvrB in an incision complex.

The protein resides in the cytoplasm. The UvrABC repair system catalyzes the recognition and processing of DNA lesions. UvrC both incises the 5' and 3' sides of the lesion. The N-terminal half is responsible for the 3' incision and the C-terminal half is responsible for the 5' incision. This chain is UvrABC system protein C, found in Lactobacillus helveticus (strain DPC 4571).